We begin with the raw amino-acid sequence, 190 residues long: Threonylcarbamoyl-AMP synthase (190 aa).

Residues 7–190 enclose the YrdC-like domain; the sequence is LGSIAQAVDV…ALTGERFRQG (184 aa).

Belongs to the SUA5 family. TsaC subfamily.

Its subcellular location is the cytoplasm. The catalysed reaction is L-threonine + hydrogencarbonate + ATP = L-threonylcarbamoyladenylate + diphosphate + H2O. Functionally, required for the formation of a threonylcarbamoyl group on adenosine at position 37 (t(6)A37) in tRNAs that read codons beginning with adenine. Catalyzes the conversion of L-threonine, HCO(3)(-)/CO(2) and ATP to give threonylcarbamoyl-AMP (TC-AMP) as the acyladenylate intermediate, with the release of diphosphate. The polypeptide is Threonylcarbamoyl-AMP synthase (Enterobacter sp. (strain 638)).